Reading from the N-terminus, the 776-residue chain is Endonuclease MutS2 (776 aa).

Residue 328-335 (GPNTGGKT) coordinates ATP. The 76-residue stretch at 701–776 (LDLRGKRYEE…GSGATIVTFK (76 aa)) folds into the Smr domain.

Belongs to the DNA mismatch repair MutS family. MutS2 subfamily. In terms of assembly, homodimer. Binds to stalled ribosomes, contacting rRNA.

Functionally, endonuclease that is involved in the suppression of homologous recombination and thus may have a key role in the control of bacterial genetic diversity. Acts as a ribosome collision sensor, splitting the ribosome into its 2 subunits. Detects stalled/collided 70S ribosomes which it binds and splits by an ATP-hydrolysis driven conformational change. Acts upstream of the ribosome quality control system (RQC), a ribosome-associated complex that mediates the extraction of incompletely synthesized nascent chains from stalled ribosomes and their subsequent degradation. Probably generates substrates for RQC. This is Endonuclease MutS2 from Streptococcus mutans serotype c (strain ATCC 700610 / UA159).